A 152-amino-acid polypeptide reads, in one-letter code: Mitochondrial holo-[acyl-carrier-protein] synthase (152 aa).

Belongs to the P-Pant transferase superfamily. AcpS family.

Its subcellular location is the mitochondrion. The catalysed reaction is apo-[ACP] + CoA = holo-[ACP] + adenosine 3',5'-bisphosphate + H(+). Its function is as follows. Transfers the 4'-phosphopantetheine moiety from coenzyme A to a Ser of mitochondrial acyl-carrier-protein. The sequence is that of Mitochondrial holo-[acyl-carrier-protein] synthase (PPT2) from Candida glabrata (strain ATCC 2001 / BCRC 20586 / JCM 3761 / NBRC 0622 / NRRL Y-65 / CBS 138) (Yeast).